The following is a 481-amino-acid chain: UDP-N-acetylmuramoyl-L-alanyl-D-glutamate--L-lysine ligase (481 aa).

Ser42 lines the UDP-N-acetyl-alpha-D-muramoyl-L-alanyl-D-glutamate pocket. 118 to 124 (GTKGKTT) is a binding site for ATP. Residues Gln158, 160 to 161 (TT), Ser187, and Arg195 each bind UDP-N-acetyl-alpha-D-muramoyl-L-alanyl-D-glutamate. Lys229 carries the N6-carboxylysine modification. An L-lysine recognition motif motif is present at residues 404 to 407 (DDPN).

It belongs to the MurCDEF family. MurE subfamily. Carboxylation is probably crucial for Mg(2+) binding and, consequently, for the gamma-phosphate positioning of ATP.

It is found in the cytoplasm. The enzyme catalyses UDP-N-acetyl-alpha-D-muramoyl-L-alanyl-D-glutamate + L-lysine + ATP = UDP-N-acetyl-alpha-D-muramoyl-L-alanyl-gamma-D-glutamyl-L-lysine + ADP + phosphate + H(+). Its pathway is cell wall biogenesis; peptidoglycan biosynthesis. Catalyzes the addition of L-lysine to the nucleotide precursor UDP-N-acetylmuramoyl-L-alanyl-D-glutamate (UMAG) in the biosynthesis of bacterial cell-wall peptidoglycan. In Streptococcus pyogenes serotype M4 (strain MGAS10750), this protein is UDP-N-acetylmuramoyl-L-alanyl-D-glutamate--L-lysine ligase.